A 456-amino-acid chain; its full sequence is Putative F-box/FBD/LRR-repeat protein At1g66300 (456 aa).

The tract at residues 1–23 (MDEDGEKRVRTKRLCSPESSDKK) is disordered. The 47-residue stretch at 28-74 (VDWVRDLPESLICHVLLNLSTKDVIKNCVLSTKWRYLWRYVPGLDLD) folds into the F-box domain. LRR repeat units lie at residues 136–163 (HLDL…KLCG), 185–210 (VKFA…TLCR), 234–260 (PNTM…TLSH), and 347–372 (FYED…VVGS). An FBD domain is found at 377–429 (MERTSIISGHRCLLSSLEYVEIETPLTGEVFEMKLVSYLLENSPILKKLTIHL).

The protein is Putative F-box/FBD/LRR-repeat protein At1g66300 of Arabidopsis thaliana (Mouse-ear cress).